Here is a 332-residue protein sequence, read N- to C-terminus: Endonuclease 8-like 2 (332 aa).

Catalysis depends on proline 2, which acts as the Schiff-base intermediate with DNA. Glutamate 3 functions as the Proton donor in the catalytic mechanism. Lysine 50 functions as the Proton donor; for beta-elimination activity in the catalytic mechanism. An N6-acetyllysine modification is found at lysine 50. Residues 56–121 form a disordered region; it reads FDPDEEMGPP…EDDSEYLERD (66 aa). Serine 68 carries the phosphoserine modification. The segment covering 74-84 has biased composition (basic and acidic residues); sequence PQKEAQKEGAA. The segment covering 94-105 has biased composition (polar residues); the sequence is GQKTPDGSSQSA. Lysine 154 carries the post-translational modification N6-acetyllysine. Asparagine 231 provides a ligand contact to DNA. The FPG-type zinc finger occupies 284-320; that stretch reads QVYQREQCPAGHQVMKEAFGPQDGLQRLTWWCPQCQP. The Proton donor; for delta-elimination activity role is filled by arginine 310.

This sequence belongs to the FPG family. Binds EP300.

The protein resides in the nucleus. It carries out the reaction 2'-deoxyribonucleotide-(2'-deoxyribose 5'-phosphate)-2'-deoxyribonucleotide-DNA = a 3'-end 2'-deoxyribonucleotide-(2,3-dehydro-2,3-deoxyribose 5'-phosphate)-DNA + a 5'-end 5'-phospho-2'-deoxyribonucleoside-DNA + H(+). Its activity is regulated as follows. Acetylation of Lys-50 leads to loss of DNA nicking activity. Involved in base excision repair of DNA damaged by oxidation or by mutagenic agents. Has DNA glycosylase activity towards 5-hydroxyuracil and other oxidized derivatives of cytosine with a preference for mismatched double-stranded DNA (DNA bubbles). Has low or no DNA glycosylase activity towards thymine glycol, 2-hydroxyadenine, hypoxanthine and 8-oxoguanine. Has AP (apurinic/apyrimidinic) lyase activity and introduces nicks in the DNA strand. Cleaves the DNA backbone by beta-delta elimination to generate a single-strand break at the site of the removed base with both 3'- and 5'-phosphates. The sequence is that of Endonuclease 8-like 2 (NEIL2) from Pongo abelii (Sumatran orangutan).